The chain runs to 214 residues: Adenylate kinase (214 aa).

15-20 (GAGKGT) is a binding site for ATP. An NMP region spans residues 35–64 (ASGDLFREAIKNQSVIGRKIAAIISQGGYV). Residues Ser36, Arg41, 62–64 (GYV), 90–93 (GYPR), and Gln97 each bind AMP. The segment at 127 to 164 (NRVICNNCNSVYNLLFQKPLVENSCDQCSAKLVKRSDD) is LID. Residue Arg128 coordinates ATP. Residues Cys131 and Cys134 each contribute to the Zn(2+) site. 137-138 (VY) is a binding site for ATP. Cys151 and Cys154 together coordinate Zn(2+). Residues Arg161 and Arg172 each contribute to the AMP site. An ATP-binding site is contributed by Leu200.

Belongs to the adenylate kinase family. Monomer.

The protein resides in the cytoplasm. It carries out the reaction AMP + ATP = 2 ADP. It participates in purine metabolism; AMP biosynthesis via salvage pathway; AMP from ADP: step 1/1. In terms of biological role, catalyzes the reversible transfer of the terminal phosphate group between ATP and AMP. Plays an important role in cellular energy homeostasis and in adenine nucleotide metabolism. The protein is Adenylate kinase of Mycoplasma genitalium (strain ATCC 33530 / DSM 19775 / NCTC 10195 / G37) (Mycoplasmoides genitalium).